Here is a 460-residue protein sequence, read N- to C-terminus: MATGKIVQVIGAVVDVEFPQDAVPRVYEALEVQNGNEVLVLEVQQQLGGGIVRTIAMGSSDGLRRGLDVKDLEHPIEVPVGKATLGRIMNVLGQPVDMKGDIGEEERWAIHRAAPSYEELSSSQELLETGIKVIDLMCPFAKGGKVGLFGGAGVGKTVNMMELIRNIAIEHSGYSVFAGVGERTREGNDFYHEMTDSNVIDKVSLVYGQMNEPPGNRLRVALTGLTMAEKFRDEGRDVLLFVDNIYRYTLAGTEVSALLGRMPSAVGYQPTLAEEMGVLQERITSTKTGSITSVQAVYVPADDLTDPSPATTFAHLDATVVLSRQIASLGIYPAVDPLDSTSRQLDPLVVGQEHYDTARGVQSILQRYQELKDIIAILGMDELSEEDKLVVARARKIQRFLSQPFFVAEVFTGSPGKYVALKDTIRGFKGIMEGEYDHLPEQAFYMVGSIDEAVEKAKKL.

150–157 (GGAGVGKT) provides a ligand contact to ATP.

It belongs to the ATPase alpha/beta chains family. As to quaternary structure, F-type ATPases have 2 components, CF(1) - the catalytic core - and CF(0) - the membrane proton channel. CF(1) has five subunits: alpha(3), beta(3), gamma(1), delta(1), epsilon(1). CF(0) has three main subunits: a(1), b(2) and c(9-12). The alpha and beta chains form an alternating ring which encloses part of the gamma chain. CF(1) is attached to CF(0) by a central stalk formed by the gamma and epsilon chains, while a peripheral stalk is formed by the delta and b chains.

It is found in the cell inner membrane. The catalysed reaction is ATP + H2O + 4 H(+)(in) = ADP + phosphate + 5 H(+)(out). Produces ATP from ADP in the presence of a proton gradient across the membrane. The catalytic sites are hosted primarily by the beta subunits. The polypeptide is ATP synthase subunit beta (Klebsiella pneumoniae subsp. pneumoniae (strain ATCC 700721 / MGH 78578)).